Here is a 200-residue protein sequence, read N- to C-terminus: Elongation factor Ts (200 aa).

The segment at T83–A86 is involved in Mg(2+) ion dislocation from EF-Tu.

The protein belongs to the EF-Ts family.

It localises to the cytoplasm. In terms of biological role, associates with the EF-Tu.GDP complex and induces the exchange of GDP to GTP. It remains bound to the aminoacyl-tRNA.EF-Tu.GTP complex up to the GTP hydrolysis stage on the ribosome. This chain is Elongation factor Ts, found in Syntrophobacter fumaroxidans (strain DSM 10017 / MPOB).